The sequence spans 82 residues: MLVIFLGILGLLANQVSSQLVGQLHPTENPSENELEYWCTYMECCQFCWDCQNGLCVNKLGNTTILENEYVHPCIVSRWLNK.

Positions Met-1–Glu-28 are cleaved as a signal peptide. Asn-62 carries an N-linked (GlcNAc...) asparagine; by host glycan.

Belongs to the asfivirus MGF 110 family.

Functionally, plays a role in virus cell tropism, and may be required for efficient virus replication in macrophages. The polypeptide is Protein MGF 110-5L (Ornithodoros (relapsing fever ticks)).